Reading from the N-terminus, the 2055-residue chain is Dedicator of cytokinesis protein 9 (2055 aa).

Phosphoserine occurs at positions 178 and 181. The PH domain maps to 185–292 (GITKHGWLYK…WVTVLNKILQ (108 aa)). Positions 301–326 (EKRNGDPHEDDEQSKLEGSGSGLDSY) are disordered. 2 positions are modified to phosphoserine: Ser-444 and Ser-453. One can recognise a C2 DOCK-type domain in the interval 649–827 (SNHLYVYPKY…PLLKISTHLV (179 aa)). Residues Ser-936 and Ser-1244 each carry the phosphoserine modification. At Thr-1250 the chain carries Phosphothreonine. The interval 1253–1291 (INSVRNADSRGSLISTDSGNSLPDRNPEKSNSLDKQQQS) is disordered. Phosphoserine is present on residues Ser-1264, Ser-1270, and Ser-1273. Residues 1264-1276 (SLISTDSGNSLPD) show a composition bias toward polar residues. In terms of domain architecture, DOCKER spans 1614-2055 (KSYASTPELR…LSDIMREQMG (442 aa)). Residues 1679-2055 (DEEASMMEDV…LSDIMREQMG (377 aa)) form an interaction with CDC42 region.

The protein belongs to the DOCK family. Homodimer. Interacts preferentially with nucleotide-depleted CDC42. In terms of tissue distribution, expressed in lung. Also detected in Peyers patches, thymus, brain and lymph nodes. Expressed in Purkinje cells.

Its subcellular location is the endomembrane system. Its function is as follows. Guanine nucleotide-exchange factor (GEF) that activates CDC42 by exchanging bound GDP for free GTP. Overexpression induces filopodia formation. The protein is Dedicator of cytokinesis protein 9 of Mus musculus (Mouse).